A 590-amino-acid polypeptide reads, in one-letter code: DNA primase (590 aa).

The segment at 37–61 (CPFHTEKTPSFIVNPAGAHYHCFGC) adopts a CHC2-type zinc-finger fold. The region spanning 253–333 (KKVILVEGQA…QMSVFVCKLP (81 aa)) is the Toprim domain. Residues Glu-259, Asp-304, and Asp-306 each contribute to the Mg(2+) site.

It belongs to the DnaG primase family. In terms of assembly, monomer. Interacts with DnaB. Requires Zn(2+) as cofactor. Mg(2+) serves as cofactor.

The enzyme catalyses ssDNA + n NTP = ssDNA/pppN(pN)n-1 hybrid + (n-1) diphosphate.. Its function is as follows. RNA polymerase that catalyzes the synthesis of short RNA molecules used as primers for DNA polymerase during DNA replication. This is DNA primase from Chlamydia pneumoniae (Chlamydophila pneumoniae).